The primary structure comprises 495 residues: Carbohydrate oxidase (495 aa).

The N-terminal stretch at 1 to 22 (MRSAFILALGLITASADALVTR) is a signal peptide. The 175-residue stretch at 55–229 (LPYIPTAIAQ…AVWKLATFPA (175 aa)) folds into the FAD-binding PCMH-type domain. A cross-link (6-(S-cysteinyl)-8alpha-(pros-histidyl)-FAD (His-Cys)) is located at residues 92–154 (HSYASFGFGG…YGRAISHGTC (63 aa)). N-linked (GlcNAc...) asparagine glycosylation is found at Asn-244 and Asn-417.

It belongs to the oxygen-dependent FAD-linked oxidoreductase family. The cofactor is FAD. The FAD cofactor is bound via a bicovalent 6-S-cysteinyl, 8alpha-N1-histidyl FAD linkage.

It is found in the secreted. The enzyme catalyses beta-D-glucose + O2 = D-glucono-1,5-lactone + H2O2. It catalyses the reaction D-galactose + O2 = D-galactono-1,5-lactone + H2O2. It carries out the reaction D-cellobiose + O2 = D-cellobiono-1,5-lactone + H2O2. The catalysed reaction is beta-lactose + O2 = lactobiono-1,5-lactone + H2O2. The enzyme catalyses D-maltose + O2 = D-maltobiono-1,5-lactone + H2O2. It catalyses the reaction D-xylose + O2 = D-xylono-1,5-lactone + H2O2. Functionally, catalyzes the selective oxidation of C1 hydroxyl moieties on mono-, oligo- and polysaccharides with concomitant reduction of molecular oxygen to hydrogen peroxide. This results in the formation of the corresponding lactones, which typically undergo spontaneous hydrolysis. Carbohydrate oxidase is able to oxidize a variety of substrates including D-glucose, D-galactose, D-xylose, D-maltose, D-cellobiose, and lactose. In addition, among various oligosaccharides, the enzyme preferred tetrameric dextrins, indicating a favorable interaction of four linked glucose units with the substrate binding pocket. The sequence is that of Carbohydrate oxidase from Microdochium nivale (Pink snow mold).